A 371-amino-acid polypeptide reads, in one-letter code: Ligninase LG5 (371 aa).

Positions 1-21 (MAFKKLLAVLTAALSLRAAQG) are cleaved as a signal peptide. Residues 22–27 (AAVEKR) constitute a propeptide that is removed on maturation. 4 disulfides stabilise this stretch: Cys-30–Cys-42, Cys-41–Cys-311, Cys-61–Cys-146, and Cys-275–Cys-344. His-74 serves as the catalytic Proton acceptor. The Ca(2+) site is built by Asp-75, Gly-92, Asp-94, and Ser-96. Residue His-202 participates in heme b binding. Residues Ser-203, Asp-220, Thr-222, Ile-225, and Asp-227 each contribute to the Ca(2+) site. Residue Asn-283 is glycosylated (N-linked (GlcNAc...) asparagine). A disordered region spans residues 349–371 (FPTLSTLPGPATSVARIPPPPGA).

Belongs to the peroxidase family. Ligninase subfamily. It depends on Ca(2+) as a cofactor. Heme b serves as cofactor.

The enzyme catalyses 1-(3,4-dimethoxyphenyl)-2-(2-methoxyphenoxy)propane-1,3-diol + H2O2 = 3,4-dimethoxybenzaldehyde + guaiacol + glycolaldehyde + H2O. It catalyses the reaction 2 (3,4-dimethoxyphenyl)methanol + H2O2 = 2 (3,4-dimethoxyphenyl)methanol radical + 2 H2O. It functions in the pathway secondary metabolite metabolism; lignin degradation. Its function is as follows. Depolymerization of lignin. Catalyzes the C(alpha)-C(beta) cleavage of the propyl side chains of lignin. The sequence is that of Ligninase LG5 (GLG5) from Phanerodontia chrysosporium (White-rot fungus).